Here is a 624-residue protein sequence, read N- to C-terminus: (-)-beta-phellandrene synthase 3, chloroplastic (624 aa).

The N-terminal 48 residues, 1–48 (MAIVSSVPLASKSCLHKSLISSIHKLKPFCRTIPTLGMSRPGKYVMPS), are a transit peptide targeting the chloroplast. Residues Asp375, Asp379, and Asp527 each coordinate Mg(2+). The DDXXD motif signature appears at 375–379 (DDMYD).

It belongs to the terpene synthase family. Tpsd subfamily. Mg(2+) serves as cofactor. Requires Mn(2+) as cofactor.

The protein resides in the plastid. The protein localises to the chloroplast. It catalyses the reaction (2E)-geranyl diphosphate = (-)-beta-phellandrene + diphosphate. It participates in terpene metabolism; oleoresin biosynthesis. In terms of biological role, terpene synthase (TPS) involved in the biosynthesis of monoterpene natural products included in conifer oleoresin secretions and volatile emissions; these compounds contribute to biotic and abiotic stress defense against herbivores and pathogens. Catalyzes the conversion of (2E)-geranyl diphosphate (GPP) to (-)-beta-phellandrene. This is (-)-beta-phellandrene synthase 3, chloroplastic from Picea sitchensis (Sitka spruce).